Consider the following 474-residue polypeptide: Aspartic-type endopeptidase ctsD (474 aa).

The N-terminal stretch at 1-19 is a signal peptide; the sequence is MHLLQCLLSTISLASTVTA. Residues 106–413 enclose the Peptidase A1 domain; it reads YFATVRVGSQ…DYDNHRIGFA (308 aa). The active site involves D124. 4 N-linked (GlcNAc...) asparagine glycosylation sites follow: N189, N197, N275, and N301. D307 is an active-site residue. 3 N-linked (GlcNAc...) asparagine glycosylation sites follow: N338, N344, and N414. The GPI-anchor amidated serine moiety is linked to residue S452. Residues 453-474 constitute a propeptide, removed in mature form; the sequence is ASIVSRFVHWPFIFALLCMVLV.

The protein belongs to the peptidase A1 family.

The protein resides in the cell membrane. Functionally, secreted aspartic-type endopeptidase which is secreted and contributes to virulence. This is Aspartic-type endopeptidase ctsD (ctsD) from Aspergillus fumigatus (strain ATCC MYA-4609 / CBS 101355 / FGSC A1100 / Af293) (Neosartorya fumigata).